The primary structure comprises 364 residues: Phosphoserine aminotransferase (364 aa).

Arg46 serves as a coordination point for L-glutamate. Residues 80–81 (AR), Trp106, Thr157, Asp176, and Gln199 each bind pyridoxal 5'-phosphate. Lys200 bears the N6-(pyridoxal phosphate)lysine mark. Position 241 to 242 (241 to 242 (NT)) interacts with pyridoxal 5'-phosphate.

The protein belongs to the class-V pyridoxal-phosphate-dependent aminotransferase family. SerC subfamily. Homodimer. Pyridoxal 5'-phosphate serves as cofactor.

The protein localises to the cytoplasm. The enzyme catalyses O-phospho-L-serine + 2-oxoglutarate = 3-phosphooxypyruvate + L-glutamate. The catalysed reaction is 4-(phosphooxy)-L-threonine + 2-oxoglutarate = (R)-3-hydroxy-2-oxo-4-phosphooxybutanoate + L-glutamate. It functions in the pathway amino-acid biosynthesis; L-serine biosynthesis; L-serine from 3-phospho-D-glycerate: step 2/3. Its pathway is cofactor biosynthesis; pyridoxine 5'-phosphate biosynthesis; pyridoxine 5'-phosphate from D-erythrose 4-phosphate: step 3/5. Its function is as follows. Catalyzes the reversible conversion of 3-phosphohydroxypyruvate to phosphoserine and of 3-hydroxy-2-oxo-4-phosphonooxybutanoate to phosphohydroxythreonine. This chain is Phosphoserine aminotransferase, found in Vibrio vulnificus (strain YJ016).